We begin with the raw amino-acid sequence, 923 residues long: Inorganic phosphate transporter PHO87 (923 aa).

The region spanning 1 to 334 (MRFSHFLKYN…HMNTRQELIE (334 aa)) is the SPX domain. The Extracellular portion of the chain corresponds to 1 to 461 (MRFSHFLKYN…KLFFGKRAMK (461 aa)). Disordered stretches follow at residues 40–74 (ETPT…SSSK) and 86–107 (FGSK…IDGN). Positions 95–104 (KRGDSDEKAI) are enriched in basic and acidic residues. K102 participates in a covalent cross-link: Glycyl lysine isopeptide (Lys-Gly) (interchain with G-Cter in ubiquitin). N-linked (GlcNAc...) asparagine glycosylation is found at N162, N202, and N274. Residues 462–482 (IGFIIIVTGVLLGVKTFNDPV) traverse the membrane as a helical segment. Over 483–493 (EHRCMALVECC) the chain is Cytoplasmic. The helical transmembrane segment at 494-514 (AFLWASEAIPLHITGLLVPLL) threads the bilayer. The Extracellular segment spans residues 515–537 (TVLFRVLKDDDGKVMGAAAASTE). A helical transmembrane segment spans residues 538–558 (ILGTMWSSTIMILLAGFTLGE). Residues 559 to 583 (ALSQYNVAKVLASWLLALAGTKPRN) lie on the Cytoplasmic side of the membrane. A helical membrane pass occupies residues 584-604 (VLLMAMSVVFFLSMWISNVAS). Over 605–627 (PVLTYSLLTPLLDPLDYTSPFAK) the chain is Extracellular. Residues 628–648 (ALVMGVALSADIGGMASPISS) form a helical membrane-spanning segment. Residues 649 to 667 (PQNIISMQYLKPYGIGWGQ) lie on the Cytoplasmic side of the membrane. Residues 668-688 (FFAVALPTGILSMLCSWALMI) traverse the membrane as a helical segment. Residues 689–707 (LTFKIGKTKLEKFKPIRTR) lie on the Extracellular side of the membrane. A helical membrane pass occupies residues 708–728 (FTIKQYFIIIVTIATILLWCV). The Cytoplasmic portion of the chain corresponds to 729 to 735 (ESQIESA). The helical transmembrane segment at 736 to 756 (FGSSGEIAVIPIVLFFGTGLL) threads the bilayer. The Extracellular portion of the chain corresponds to 757–767 (STKDFNTFPWS). The helical transmembrane segment at 768–788 (IVVLAMGGIALGKAVSSSGLL) threads the bilayer. Topologically, residues 789-802 (VTIARALQKKIQND) are cytoplasmic. A helical membrane pass occupies residues 803–823 (GVFAILCIFGILMLVVGTFVS). Topologically, residues 824–849 (HTVSAIIIIPLVQEVGDKLSDPKAAP) are extracellular. Residues 850-870 (ILVFGCALLASCGMGLASSGF) form a helical membrane-spanning segment. The Cytoplasmic portion of the chain corresponds to 871-898 (PNVTAISMTDKKGNRWLTVGAFISRGVP). Residues 899–919 (ASLLAFVCVITLGYGISSSVL) traverse the membrane as a helical segment. The Extracellular segment spans residues 920–923 (KGST).

This sequence belongs to the CitM (TC 2.A.11) transporter family.

Its subcellular location is the membrane. Its function is as follows. Involved in the uptake of inorganic phosphate. This chain is Inorganic phosphate transporter PHO87 (PHO87), found in Saccharomyces cerevisiae (strain ATCC 204508 / S288c) (Baker's yeast).